Here is a 205-residue protein sequence, read N- to C-terminus: ATP phosphoribosyltransferase (205 aa).

It belongs to the ATP phosphoribosyltransferase family. Short subfamily. As to quaternary structure, heteromultimer composed of HisG and HisZ subunits.

The protein resides in the cytoplasm. The enzyme catalyses 1-(5-phospho-beta-D-ribosyl)-ATP + diphosphate = 5-phospho-alpha-D-ribose 1-diphosphate + ATP. The protein operates within amino-acid biosynthesis; L-histidine biosynthesis; L-histidine from 5-phospho-alpha-D-ribose 1-diphosphate: step 1/9. In terms of biological role, catalyzes the condensation of ATP and 5-phosphoribose 1-diphosphate to form N'-(5'-phosphoribosyl)-ATP (PR-ATP). Has a crucial role in the pathway because the rate of histidine biosynthesis seems to be controlled primarily by regulation of HisG enzymatic activity. This Staphylococcus carnosus (strain TM300) protein is ATP phosphoribosyltransferase.